The primary structure comprises 337 residues: Ferredoxin--NADP reductase (337 aa).

Residues Asp-35, Gln-43, Tyr-48, Val-88, Phe-123, Asp-289, and Thr-330 each coordinate FAD.

This sequence belongs to the ferredoxin--NADP reductase type 2 family. Homodimer. FAD is required as a cofactor.

The enzyme catalyses 2 reduced [2Fe-2S]-[ferredoxin] + NADP(+) + H(+) = 2 oxidized [2Fe-2S]-[ferredoxin] + NADPH. This is Ferredoxin--NADP reductase from Paramagnetospirillum magneticum (strain ATCC 700264 / AMB-1) (Magnetospirillum magneticum).